The primary structure comprises 146 residues: Protein archease (146 aa).

Residues D16, D145, and I146 each contribute to the Ca(2+) site.

It belongs to the archease family.

In terms of biological role, activates the tRNA-splicing ligase complex by facilitating the enzymatic turnover of catalytic subunit RtcB. Acts by promoting the guanylylation of RtcB, a key intermediate step in tRNA ligation. Can also alter the NTP specificity of RtcB such that ATP, dGTP or ITP is used efficiently. The chain is Protein archease from Methanosarcina acetivorans (strain ATCC 35395 / DSM 2834 / JCM 12185 / C2A).